The following is a 1097-amino-acid chain: DNA-directed RNA polymerase subunit beta (1097 aa).

This sequence belongs to the RNA polymerase beta chain family. In plastids the minimal PEP RNA polymerase catalytic core is composed of four subunits: alpha, beta, beta', and beta''. When a (nuclear-encoded) sigma factor is associated with the core the holoenzyme is formed, which can initiate transcription.

The protein localises to the plastid. The protein resides in the chloroplast. The catalysed reaction is RNA(n) + a ribonucleoside 5'-triphosphate = RNA(n+1) + diphosphate. In terms of biological role, DNA-dependent RNA polymerase catalyzes the transcription of DNA into RNA using the four ribonucleoside triphosphates as substrates. The protein is DNA-directed RNA polymerase subunit beta of Rhodomonas salina (Cryptomonas salina).